The primary structure comprises 322 residues: Acetyl-coenzyme A carboxylase carboxyl transferase subunit alpha (322 aa).

Positions Ala-30–Leu-293 constitute a CoA carboxyltransferase C-terminal domain.

It belongs to the AccA family. Acetyl-CoA carboxylase is a heterohexamer composed of biotin carboxyl carrier protein (AccB), biotin carboxylase (AccC) and two subunits each of ACCase subunit alpha (AccA) and ACCase subunit beta (AccD).

It is found in the cytoplasm. The catalysed reaction is N(6)-carboxybiotinyl-L-lysyl-[protein] + acetyl-CoA = N(6)-biotinyl-L-lysyl-[protein] + malonyl-CoA. Its pathway is lipid metabolism; malonyl-CoA biosynthesis; malonyl-CoA from acetyl-CoA: step 1/1. Its function is as follows. Component of the acetyl coenzyme A carboxylase (ACC) complex. First, biotin carboxylase catalyzes the carboxylation of biotin on its carrier protein (BCCP) and then the CO(2) group is transferred by the carboxyltransferase to acetyl-CoA to form malonyl-CoA. The chain is Acetyl-coenzyme A carboxylase carboxyl transferase subunit alpha from Nitrosospira multiformis (strain ATCC 25196 / NCIMB 11849 / C 71).